We begin with the raw amino-acid sequence, 122 residues long: Spermidine export protein MdtJ (122 aa).

4 consecutive transmembrane segments (helical) span residues 1-21, 31-51, 54-74, and 81-101; these read MIYWIFLGLAIATEIIGTLSM, TGHIVMYVMITASYVMLSMAV, VALGVAYALWEGIGILFITLF, and EPISALKVLGLVTLIVGIMLV.

It belongs to the drug/metabolite transporter (DMT) superfamily. Small multidrug resistance (SMR) (TC 2.A.7.1) family. MdtJ subfamily. Forms a complex with MdtI.

Its subcellular location is the cell inner membrane. Its function is as follows. Catalyzes the excretion of spermidine. The chain is Spermidine export protein MdtJ from Serratia proteamaculans (strain 568).